The following is a 1171-amino-acid chain: MSLRFVIGRAGSGKSTLCLHEVQEELKQRPRGETILYLVPEQMTFQTQQALIGSEDVRGSIRAQVFSFSRLAWKVLQEVGGASRLHIDEAGVHMLLRKIVESRKDGLSVFQKAAEQNGFFEHLGSMIAEFKRYNVTPSNVYEMWQQLDAHSSSAEQKLLANKVYDLQLLYDDFERALIGKYLDSEDYLQLLVEKLPQSEYVKGAEIYIDGFHSFSPQELEIVRQLMICGARVTITLTLDEKTLAQPVNELDLFYETTLTYEKIKQVAREEKIEIEKTIPLMEQPRFHSPALAHLEAHYEARPNEKFNGEASVTIHTAANLRAEVEGVAREIRRLVADEDYRYRDIAVLLRNGESYYDVMRTLFTDYNIPHFIDEKRPMSHHPLVECIRSALEIISGNWRYDAVFRCVKTELLYPLDVRKETMREEMDEFENYCLAYGVQGKRWTSEDPWMYRRYRSLDDTNGMITDSEREMEEKINRLRDVVRTPVIRMQKRLKRAGTVMQMCEAVYLFLEELDVPKKLEALRIRAEESGDFLFATDHEQVWEEVMSLLDTFVEMLGEEKMSLSMFTDVMSTGLEALQFANIPPSLDQVLIANIDRSRLSNVKATFVIGVNEGVIPAAPMDEGMLSDEERDVLSAAGIELAPTTRQTLLEEQFVMYQMVTRATEKLYISCPLADEEGKTLLASSFIKKIKRMFPDVKDTFITNDVNDLSRSEQISYVATPEVTLSYVMQQLQTWKRYGFEGNLDFWWDVYNFYVTSDEWKQKSSRVLSSLFYRNRAQKLSTAVSRDLYGDKIKGSVSRMELFNRCAYAHFAQHGLSLRERDIFKLDAPDIGELFHAALKRIADRLLRENRTWADLSIKECEHLSAVVIEEIAPLLQRQILLSSNRHFYLKQKLQQIIFRTSIILREHAKSSGFVPVDLEVPFGMGGTGSLPPMEFSLPNGVKMEVVGRIDRVDKAEDENGTFLRIIDYKSSSKALDLTEVYYGLALQMLTYLDVVTSNAHTWMKKGGTASPAGVLYFHIHNPIVEVKGDASEAEIEKEILKKFKMKGLVLGDADVVRLMDNKLSTGSSDIISAGLKKDGSFSARSSIASEQEFNVLQKYVHHTFENIGKDITEGVIDIAPYKKGNKAACTFCNFKSVCQFDESLEDNQFRTLKDMKDSEAMEKIREEVGGE.

A UvrD-like helicase ATP-binding domain is found at 1-390; it reads MSLRFVIGRA…HPLVECIRSA (390 aa). 8–15 contacts ATP; sequence GRAGSGKS. The UvrD-like helicase C-terminal domain maps to 281–587; the sequence is MEQPRFHSPA…QFANIPPSLD (307 aa). Residues Cys805, Cys1129, Cys1132, and Cys1138 each contribute to the [4Fe-4S] cluster site.

The protein belongs to the helicase family. AddB/RexB type 1 subfamily. As to quaternary structure, heterodimer of AddA and AddB. Requires Mg(2+) as cofactor. It depends on [4Fe-4S] cluster as a cofactor.

Functionally, the heterodimer acts as both an ATP-dependent DNA helicase and an ATP-dependent, dual-direction single-stranded exonuclease. Recognizes the chi site generating a DNA molecule suitable for the initiation of homologous recombination. The AddB subunit has 5' -&gt; 3' nuclease activity but not helicase activity. This is ATP-dependent helicase/deoxyribonuclease subunit B from Bacillus cereus (strain ATCC 10987 / NRS 248).